The primary structure comprises 111 residues: MSKTIKVTFVINNGEEKIIEAPLGLSILEVAHSNSIDLEGACEGSLACATCHVILEEEFYNKLEKPKEEEEDMLDLAFGLTDTSRLGCQIILTEKLDGIKVRLPSATRNIK.

The region spanning 5–107 is the 2Fe-2S ferredoxin-type domain; it reads IKVTFVINNG…GIKVRLPSAT (103 aa). Positions 42, 48, 51, and 88 each coordinate [2Fe-2S] cluster.

It belongs to the adrenodoxin/putidaredoxin family. Requires [2Fe-2S] cluster as cofactor.

Its function is as follows. Ferredoxin are iron-sulfur proteins that transfer electrons in a wide variety of metabolic reactions. The protein is 2Fe-2S ferredoxin (fdxB) of Rickettsia bellii (strain RML369-C).